A 319-amino-acid chain; its full sequence is HTH-type transcriptional regulator YidZ (319 aa).

The HTH lysR-type domain maps to 8 to 65 (LDLNLLLCLQLLMQERSVTKAAKRMNVTPSAVSKSLAKLRAWFDDPLFVNSPLGLSPT). A DNA-binding region (H-T-H motif) is located at residues 25 to 44 (VTKAAKRMNVTPSAVSKSLA).

This sequence belongs to the LysR transcriptional regulatory family.

Involved in anaerobic NO protection. The sequence is that of HTH-type transcriptional regulator YidZ from Escherichia coli O6:H1 (strain CFT073 / ATCC 700928 / UPEC).